A 770-amino-acid polypeptide reads, in one-letter code: Signal transducer and activator of transcription 3 (770 aa).

The residue at position 2 (A2) is an N-acetylalanine. N6-acetyllysine occurs at positions 49 and 87. Residues D150–M162 carry the Essential for nuclear import motif. The 91-residue stretch at W580–L670 folds into the SH2 domain. 3 positions are modified to allysine; alternate: K601, K615, and K631. An N6-acetyllysine; alternate mark is found at K601, K615, and K631. Y640 carries the post-translational modification Phosphotyrosine; by TYK2. K685 carries the post-translational modification Allysine; alternate. K685 bears the N6-acetyllysine; alternate mark. Position 705 is a phosphotyrosine; by FER and PTK6 (Y705). K707 carries the post-translational modification N6-acetyllysine. A Phosphothreonine modification is found at T714. Phosphoserine; by DYRK2, NLK, NEK6, IRAK1, RPS6KA5, ZIPK/DAPK3 and PKC/PRKCE is present on S727.

Belongs to the transcription factor STAT family. As to quaternary structure, forms a homodimer or a heterodimer with a related family member (at least STAT1). Component of a promoter-binding complex composed of STAT3, NFATC3 and NFATC4; complex formation is enhanced by calcineurin. Interacts with IL31RA, NCOA1, PELP1, SIPAR, SOCS7, STATIP1 and TMF1. Interacts with IL23R in presence of IL23. Interacts (via SH2 domain) with NLK. Interacts with ARL2BP; the interaction is enhanced by LIF and JAK1 expression. Interacts with KPNA4 and KPNA5; KPNA4 may be the primary mediator of nuclear import. Interacts with CAV2; the interaction is increased on insulin-induced tyrosine phosphorylation of CAV2 and leads to STAT3 activation. Interacts with ARL2BP; interaction is enhanced with ARL2. Interacts with NEK6. Binds to CDK9 when activated and nuclear. Interacts with BMX. Interacts with ZIPK/DAPK3. Interacts with PIAS3; the interaction occurs on stimulation by IL6, CNTF or OSM and inhibits the DNA binding activity of STAT3. In prostate cancer cells, interacts with PRKCE and promotes DNA binding activity of STAT3. Interacts with STMN3, antagonizing its microtubule-destabilizing activity. Interacts with the 'Lys-129' acetylated form of BIRC5/survivin. Interacts with FER. Interacts (via SH2 domain) with EIF2AK2/PKR (via the kinase catalytic domain). Interacts with FGFR4. Interacts with INPP5F; the interaction is independent of STAT3 Tyr-705 phosphorylation status. Interacts with OCIAD1. Interacts with OCIAD2. Interacts (unphosphorylated or phosphorylated at Ser-727) with PHB1. Interacts and may form heterodimers with NHLH1. Found in a complex with SLC39A6, SLC39A10 and with the 'Ser-727' phosphorylated form of STAT3 throughout mitosis. Interacts (when acetylated) with EP300 (via bromo domain); interaction takes place following STAT3 acetylation by EP300 and promotes enhanceosome assembly. Interacts (when acetylated) with BRD2 (via bromo domain); interaction promotes STAT3 recruitment to chromatin and T-helper Th17 cell differentiation. Interacts with FAM220A/SIPAR; the interaction occurs in both the nucleus and the cytoplasm, is enhanced by IL6 and promotes STAT3 dephosphorylation. Interacts in both unphosphorylated and phosphorylated forms with FAM220A but interacts preferentially in the phosphorylated form in the nucleus. Interacts with PTPN2; the interaction is promoted by FAM220A and leads to STAT3 dephosphorylation which negatively regulates STAT3 transcriptional activator activity. Post-translationally, activated through tyrosine phosphorylation by BMX. Tyrosine phosphorylated in response to IL6, IL11, CNTF, LIF, KITLG/SCF, CSF1, EGF, PDGF, IFN-alpha, LEP and OSM. Activated KIT promotes phosphorylation on tyrosine residues and subsequent translocation to the nucleus. Tyrosine phosphorylated in response to constitutively activated FGFR1, FGFR2, FGFR3 and FGFR4. Phosphorylated on serine upon DNA damage, probably by ATM or ATR. Serine phosphorylation is important for the formation of stable DNA-binding STAT3 homodimers and maximal transcriptional activity. ARL2BP may participate in keeping the phosphorylated state of STAT3 within the nucleus. Tyrosine phosphorylated upon stimulation with EGF. Upon LPS challenge, phosphorylated within the nucleus by IRAK1. Upon UV-A treatment, phosphorylated on Ser-727 by RPS6KA5. Dephosphorylation on tyrosine residues by PTPN2 negatively regulates IL6/interleukin-6 signaling. Phosphorylation at Tyr-705 by PTK6, isoform M2 of PKM (PKM2) or FER leads to an increase of its transcriptional activity. Phosphorylation at Tyr-705 is increased in the presence of calcineurin. Phosphorylation at Tyr-640 by TYK2 negatively regulates transcriptional activity. In terms of processing, acetylated on lysine residues by EP300/p300, promoting its activation. Acetylation at Lys-49 and Lys-87 by EP300/p300 promotes its activation. Acetylation at Lys-87 by EP300/p300 promotes its association with BRD2 and recruitment to chromatin. Deacetylated at Lys-49 and Lys-87 by HDAC1. Acetylation at Lys-685 by EP300/p300 promotes its homodimerization and activation. Deacetylated at Lys-685 by HDAC3. Acetylated on lysine residues by CREBBP. Deacetylation by LOXL3 leads to disrupt STAT3 dimerization and inhibit STAT3 transcription activity. Oxidation of lysine residues to allysine on STAT3 preferentially takes place on lysine residues that are acetylated. Some lysine residues are oxidized to allysine by LOXL3, leading to disrupt STAT3 dimerization and inhibit STAT3 transcription activity. Oxidation of lysine residues to allysine on STAT3 preferentially takes place on lysine residues that are acetylated. Post-translationally, (Microbial infection) Phosphorylated on Tyr-705 in the presence of S.typhimurium SarA. In terms of tissue distribution, expressed in ventricular cardiomyocytes (at protein level). Expressed in the lung (at protein level). Expressed in the liver, spleen and kidney. Expressed in the liver.

Its subcellular location is the cytoplasm. It is found in the nucleus. In terms of biological role, signal transducer and transcription activator that mediates cellular responses to interleukins, KITLG/SCF, LEP and other growth factors. Once activated, recruits coactivators, such as NCOA1 or MED1, to the promoter region of the target gene. May mediate cellular responses to activated FGFR1, FGFR2, FGFR3 and FGFR4. Upon activation of IL6ST/gp130 signaling by interleukin-6 (IL6), binds to the IL6-responsive elements identified in the promoters of various acute-phase protein genes. Activated by IL31 through IL31RA. Acts as a regulator of inflammatory response by regulating differentiation of naive CD4(+) T-cells into T-helper Th17 or regulatory T-cells (Treg): acetylation promotes its transcription activity and cell differentiation while deacetylation and oxidation of lysine residues by LOXL3 inhibits differentiation. Involved in cell cycle regulation by inducing the expression of key genes for the progression from G1 to S phase, such as CCND1. Mediates the effects of LEP on melanocortin production, body energy homeostasis and lactation. May play an apoptotic role by transctivating BIRC5 expression under LEP activation. Cytoplasmic STAT3 represses macroautophagy by inhibiting EIF2AK2/PKR activity. Plays a crucial role in basal beta cell functions, such as regulation of insulin secretion. Following JAK/STAT signaling activation and as part of a complex with NFATC3 and NFATC4, binds to the alpha-beta E4 promoter region of CRYAB and activates transcription in cardiomyocytes. Plays an important role in host defense in methicillin-resistant S.aureus lung infection by regulating the expression of the antimicrobial lectin REG3G. The sequence is that of Signal transducer and activator of transcription 3 from Mus musculus (Mouse).